Consider the following 151-residue polypeptide: S-ribosylhomocysteine lyase (151 aa).

Fe cation contacts are provided by H54, H58, and C121.

The protein belongs to the LuxS family. As to quaternary structure, homodimer. Fe cation serves as cofactor.

It carries out the reaction S-(5-deoxy-D-ribos-5-yl)-L-homocysteine = (S)-4,5-dihydroxypentane-2,3-dione + L-homocysteine. In terms of biological role, involved in the synthesis of autoinducer 2 (AI-2) which is secreted by bacteria and is used to communicate both the cell density and the metabolic potential of the environment. The regulation of gene expression in response to changes in cell density is called quorum sensing. Catalyzes the transformation of S-ribosylhomocysteine (RHC) to homocysteine (HC) and 4,5-dihydroxy-2,3-pentadione (DPD). This chain is S-ribosylhomocysteine lyase, found in Clostridioides difficile (strain 630) (Peptoclostridium difficile).